The chain runs to 1532 residues: Multidrug resistance-associated protein 1 (1532 aa).

The Extracellular segment spans residues 1 to 33 (MALSSFCSSDGSDPLWDWNVTWHTSNPDFTKCF). N19 is a glycosylation site (N-linked (GlcNAc...) asparagine). A helical membrane pass occupies residues 34–54 (QNTVLTWVPCFYLWSCFPLYF). The Cytoplasmic portion of the chain corresponds to 55 to 74 (LYLSRHDRGYIQMTHLNKAK). Residues 75–95 (TALGFFLWIICWADLFYSFWE) traverse the membrane as a helical segment. Residues 96 to 100 (RSQGM) are Extracellular-facing. The helical transmembrane segment at 101-121 (LLAPVLLVSPTLLGITMLLAT) threads the bilayer. The Cytoplasmic segment spans residues 122-133 (FLIQFERRKGVQ). Residues 134-154 (SSGIMLTFWLVALLCALAILR) traverse the membrane as a helical segment. Topologically, residues 155 to 172 (SKIISALKKDAQVDMFRD) are extracellular. Residues 173–193 (SAFYLYFTLVFIQLVLSCFSD) traverse the membrane as a helical segment. The Cytoplasmic portion of the chain corresponds to 194 to 317 (SSPLFSETVR…KDRDPSLFKV (124 aa)). Y277 carries the phosphotyrosine modification. Residue S290 is modified to Phosphoserine. The helical transmembrane segment at 318-338 (LYKTFGPYFLMSFLYKALHDL) threads the bilayer. In terms of domain architecture, ABC transmembrane type-1 1 spans 326–609 (FLMSFLYKAL…LPMVISSIVQ (284 aa)). Residues 339 to 364 (MMFAGPEILELIINFVNDREAPDWQG) are Extracellular-facing. The helical transmembrane segment at 365–385 (YLYTALLFVSACLQTLALHQY) threads the bilayer. The Cytoplasmic segment spans residues 386–441 (FHICFVTGMRIKTAVVGAVYRKALVITNSARKSSTVGEIVNLMSVDAQRFMDLATY). The chain crosses the membrane as a helical span at residues 442-462 (INMIWSAPLQVTLALYFLWLN). Residues 463–465 (LGP) are Extracellular-facing. The helical transmembrane segment at 466-486 (SVLAGVAVMILMVPFNAVMAM) threads the bilayer. At 487–548 (KTKTYQVAHM…VLKKSAYLAA (62 aa)) the chain is on the cytoplasmic side. The residue at position 504 (K504) is an N6-succinyllysine. The helical transmembrane segment at 549 to 569 (VGTFTWVCTPFLVALSTFAVF) threads the bilayer. Over 570 to 591 (VTVDEKNILDAKKAFVSLALFN) the chain is Extracellular. The helical transmembrane segment at 592 to 612 (ILRFPLNILPMVISSIVQASV) threads the bilayer. Topologically, residues 613-967 (SLKRLRIFLS…VKLSVYWNYM (355 aa)) are cytoplasmic. Residues 645 to 869 (ITVKNATFTW…DGAFAEFVRT (225 aa)) form the ABC transporter 1 domain. 679–686 (GQVGCGKS) lines the ATP pocket. Residues S879, S883, S916, and S931 each carry the phosphoserine modification. The helical transmembrane segment at 968–988 (KAIGLCISFLSIFLFLCNHVS) threads the bilayer. Positions 975–1257 (SFLSIFLFLC…LVRMSSEMET (283 aa)) constitute an ABC transmembrane type-1 2 domain. The Extracellular portion of the chain corresponds to 989–1026 (ALASNYWLSLWTDDRPAVNGTQENRNFRLSVYGALGIL). Residues 1027 to 1047 (QGVAVFGYSMAVSIGGIFASR) form a helical membrane-spanning segment. Residues 1048 to 1090 (RLHLDLLQNVLRSPMSFFERTPSGNLVNRFSKELDTVDSMIPQ) lie on the Cytoplasmic side of the membrane. The helical transmembrane segment at 1091-1111 (VIKMFMGSLFSVIGAVIIILL) threads the bilayer. A topological domain (extracellular) is located at residue A1112. The helical transmembrane segment at 1113–1133 (TPIAAVIIPPLGLVYFFVQRF) threads the bilayer. Residues 1134–1204 (YVASSRQLKR…VANRWLAVRL (71 aa)) lie on the Cytoplasmic side of the membrane. A helical membrane pass occupies residues 1205–1225 (ECVGNCIVLFAALFAVISRHS). Residues 1226 to 1227 (LS) lie on the Extracellular side of the membrane. The chain crosses the membrane as a helical span at residues 1228 to 1248 (AGLVGLSVSYSLQITAYLNWL). Residues 1249–1532 (VRMSSEMETN…YSMAKDAGLV (284 aa)) are Cytoplasmic-facing. Residues 1294 to 1528 (VEFRDYCLRY…RGVFYSMAKD (235 aa)) form the ABC transporter 2 domain. Residue 1328–1335 (GRTGAGKS) participates in ATP binding.

Belongs to the ABC transporter superfamily. ABCC family. Conjugate transporter (TC 3.A.1.208) subfamily. Post-translationally, glycosylated. Skeletal muscle, brain, heart, spleen, lung and kidney.

The protein resides in the cell membrane. It is found in the basolateral cell membrane. It catalyses the reaction ATP + H2O + xenobioticSide 1 = ADP + phosphate + xenobioticSide 2.. The enzyme catalyses an S-substituted glutathione(in) + ATP + H2O = an S-substituted glutathione(out) + ADP + phosphate + H(+). The catalysed reaction is sphing-4-enine 1-phosphate(in) + ATP + H2O = sphing-4-enine 1-phosphate(out) + ADP + phosphate + H(+). It carries out the reaction leukotriene C4(in) + ATP + H2O = leukotriene C4(out) + ADP + phosphate + H(+). It catalyses the reaction 17beta-estradiol 17-O-(beta-D-glucuronate)(in) + ATP + H2O = 17beta-estradiol 17-O-(beta-D-glucuronate)(out) + ADP + phosphate + H(+). The enzyme catalyses daunorubicin(in) + ATP + H2O = daunorubicin(out) + ADP + phosphate + H(+). The catalysed reaction is vincristine(in) + ATP + H2O = vincristine(out) + ADP + phosphate + H(+). It carries out the reaction 2',3'-cGAMP(in) + ATP + H2O = 2',3'-cGAMP(out) + ADP + phosphate + H(+). It catalyses the reaction S-[(2E,6E,10E)-geranylgeranyl]-L-glutathione(in) + ATP + H2O = S-[(2E,6E,10E)-geranylgeranyl]-L-glutathione(out) + ADP + phosphate + H(+). The enzyme catalyses prostaglandin A2-S-(R)-glutathione(in) + ATP + H2O = prostaglandin A2-S-(R)-glutathione(out) + ADP + phosphate + H(+). The catalysed reaction is prostaglandin A2-S-(S)-glutathione(in) + ATP + H2O = prostaglandin A2-S-(S)-glutathione(out) + ADP + phosphate + H(+). Its activity is regulated as follows. MK 571 inhibits sphingosine 1-phosphate and leukotriene C4 export. In terms of biological role, mediates export of organic anions and drugs from the cytoplasm. Mediates ATP-dependent transport of glutathione and glutathione conjugates, leukotriene C4, estradiol-17-beta-o-glucuronide, methotrexate, antiviral drugs and other xenobiotics. Confers resistance to anticancer drugs by decreasing accumulation of drug in cells, and by mediating ATP- and GSH-dependent drug export. Hydrolyzes ATP with low efficiency. Catalyzes the export of sphingosine 1-phosphate from mast cells independently of their degranulation. Participates in inflammatory response by allowing export of leukotriene C4 from leukotriene C4-synthesizing cells. Exports S-geranylgeranyl-glutathione (GGG) in lymphoid cells and stromal compartments of lymphoid organs. ABCC1 (via extracellular transport) with GGT5 (via GGG catabolism) establish GGG gradients within lymphoid tissues to position P2RY8-positive lymphocytes at germinal centers in lymphoid follicles and restrict their chemotactic transmigration from blood vessels to the bone marrow parenchyma. Mediates basolateral export of GSH-conjugated R- and S-prostaglandin A2 diastereomers in polarized epithelial cells. The protein is Multidrug resistance-associated protein 1 of Rattus norvegicus (Rat).